The following is a 172-amino-acid chain: C-phycocyanin-2 beta subunit (172 aa).

N72 is subject to N4-methylasparagine. Residues C82 and C153 each contribute to the (2R,3E)-phycocyanobilin site.

Belongs to the phycobiliprotein family. As to quaternary structure, heterodimer of an alpha and a beta subunit, which further assembles into trimers and the trimers into hexamers. Contains two covalently linked bilin chromophores.

The protein resides in the cellular thylakoid membrane. Functionally, light-harvesting photosynthetic bile pigment-protein from the phycobiliprotein complex (phycobilisome, PBS). Phycocyanin is the major phycobiliprotein in the PBS rod. The polypeptide is C-phycocyanin-2 beta subunit (cpcB2) (Pseudanabaena tenuis (strain PCC 7409)).